Here is a 30-residue protein sequence, read N- to C-terminus: ADDRNPLEECFRETDYEEFLEIAKNGLSTT.

The protein belongs to the flavin monoamine oxidase family. FIG1 subfamily. As to quaternary structure, monomer. This is in contrast with most of its orthologs, that are non-covalently linked homodimers. FAD is required as a cofactor. In terms of processing, N-glycosylated. In terms of tissue distribution, expressed by the venom gland.

The protein localises to the secreted. It carries out the reaction an L-alpha-amino acid + O2 + H2O = a 2-oxocarboxylate + H2O2 + NH4(+). The enzyme catalyses L-leucine + O2 + H2O = 4-methyl-2-oxopentanoate + H2O2 + NH4(+). It catalyses the reaction L-phenylalanine + O2 + H2O = 3-phenylpyruvate + H2O2 + NH4(+). The catalysed reaction is L-tryptophan + O2 + H2O = indole-3-pyruvate + H2O2 + NH4(+). It carries out the reaction L-methionine + O2 + H2O = 4-methylsulfanyl-2-oxobutanoate + H2O2 + NH4(+). The enzyme catalyses L-2-aminohexanoate + O2 + H2O = 2-oxohexanoate + H2O2 + NH4(+). It catalyses the reaction L-tyrosine + O2 + H2O = 3-(4-hydroxyphenyl)pyruvate + H2O2 + NH4(+). Catalyzes an oxidative deamination of predominantly hydrophobic and aromatic L-amino acids, thus producing hydrogen peroxide that may contribute to the diverse toxic effects of this enzyme. Is highly active against L-Met, L-Leu, L-norleucine (L-2-aminohexanoate), L-Trp, L-Phe, moderately active against L-Tyr, and no active on L-Gly, L-Ala, L-Val, L-Pro, L-His, L-Lys, L-Arg, L-Asp, L-Asn, L-Gln, L-Glu, L-Ser, and L-Thr. Exhibits diverse biological activities, such as hemorrhage, hemolysis, edema, antibacterial and antiparasitic activities. In addition, this protein induces apoptosis. It also interacts with endothelial cells, and inhibits collagen- and ADP-induced platelet aggregation. L-LAAO family effects on platelets are controversial, since it either induces aggregation or inhibits agonist-induced aggregation. These different effects are probably due to different experimental conditions. This Bothrops leucurus (Whitetail lancehead) protein is L-amino-acid oxidase.